Consider the following 234-residue polypeptide: bZIP transcription factor 27 (234 aa).

A Nuclear localization signal motif is present at residues 152-159 (KKRGQDSD). The bZIP domain maps to 163-213 (GDRRYKRMIKNRESAARSRARKQAYTNELELEIAHLQTENARLKIQQEQLK). Residues 165–184 (RRYKRMIKNRESAARSRARK) are basic motif. A leucine-zipper region spans residues 191–212 (LELEIAHLQTENARLKIQQEQL). Position 231 is a phosphothreonine (T231).

Belongs to the bZIP family. In terms of assembly, self-interacts. Interacts with FT and FD/BZIP14. Interacts with CPK33. Phosphorylated. As to expression, expressed on the flanks of the shoot apex.

It localises to the nucleus. Its function is as follows. Transcription factor required for the transition to flowering promoted by FT. The sequence is that of bZIP transcription factor 27 from Arabidopsis thaliana (Mouse-ear cress).